The following is a 221-amino-acid chain: Superoxide dismutase [Mn] 1, mitochondrial (221 aa).

Residues 1-24 constitute a mitochondrion transit peptide; that stretch reads MLQNTVRCVSKLVQPITGVAAVRS. Mn(2+) is bound by residues histidine 50, histidine 98, aspartate 182, and histidine 186.

Belongs to the iron/manganese superoxide dismutase family. Homotetramer. The cofactor is Mn(2+).

It localises to the mitochondrion matrix. It catalyses the reaction 2 superoxide + 2 H(+) = H2O2 + O2. In terms of biological role, destroys superoxide anion radicals which are normally produced within the cells and which are toxic to biological systems. This Caenorhabditis elegans protein is Superoxide dismutase [Mn] 1, mitochondrial (sod-2).